The chain runs to 289 residues: MSWMTDYVRPKLRGLLQRDVPDNLWTNCESCGQMMLTKELERSEKVCPHCGHHMRATAKERLGWTFDGGEYTTIELPKMPVDPLGFKDSKRYTDRLKDARHKSHLDEALVVAHGMIKGQKAVVAVMAPEFLLGTMGAALGEAFVAACRLAVLQKAPLVVYTASGGARMQEGVVSLMQMPRTTIGVQMLQEAGLPYVVVFTNPTTGGVSASFAMLGDVHIAEPNALIAFAGPRVIQDTVREKLPEGFQRSEYLREHGMVDIVAKRSELPELLGRILGIMMRQKTVSDAAA.

Positions 24-289 (LWTNCESCGQ…RQKTVSDAAA (266 aa)) constitute a CoA carboxyltransferase N-terminal domain. Positions 28, 31, 47, and 50 each coordinate Zn(2+). Residues 28–50 (CESCGQMMLTKELERSEKVCPHC) form a C4-type zinc finger.

This sequence belongs to the AccD/PCCB family. As to quaternary structure, acetyl-CoA carboxylase is a heterohexamer composed of biotin carboxyl carrier protein (AccB), biotin carboxylase (AccC) and two subunits each of ACCase subunit alpha (AccA) and ACCase subunit beta (AccD). Zn(2+) is required as a cofactor.

It localises to the cytoplasm. It catalyses the reaction N(6)-carboxybiotinyl-L-lysyl-[protein] + acetyl-CoA = N(6)-biotinyl-L-lysyl-[protein] + malonyl-CoA. It functions in the pathway lipid metabolism; malonyl-CoA biosynthesis; malonyl-CoA from acetyl-CoA: step 1/1. Component of the acetyl coenzyme A carboxylase (ACC) complex. Biotin carboxylase (BC) catalyzes the carboxylation of biotin on its carrier protein (BCCP) and then the CO(2) group is transferred by the transcarboxylase to acetyl-CoA to form malonyl-CoA. This is Acetyl-coenzyme A carboxylase carboxyl transferase subunit beta from Gluconobacter oxydans (strain 621H) (Gluconobacter suboxydans).